We begin with the raw amino-acid sequence, 341 residues long: Twinfilin-2 (341 aa).

ADF-H domains lie at 1–131 (ATEE…KHLS) and 169–305 (GLAF…DEVH). At lysine 6 the chain carries N6-acetyllysine. Position 301 is a phosphotyrosine (tyrosine 301). The segment at 314 to 341 (AFAKPKGPGGKRGHKRLIRGPGENGDDS) is disordered. Residues 322 to 331 (GGKRGHKRLI) are compositionally biased toward basic residues. A Phosphoserine modification is found at serine 341.

This sequence belongs to the actin-binding proteins ADF family. Twinfilin subfamily. As to quaternary structure, interacts with G-actin; ADP-actin form and capping protein (CP). May also be able to interact with TWF1 and phosphoinositides, PI(4,5)P2. When bound to PI(4,5)P2, it is down-regulated. Interacts with MYO7A. Phosphorylated on both serine and threonine residues.

Its subcellular location is the cytoplasm. It localises to the cytoskeleton. The protein localises to the perinuclear region. The protein resides in the cell projection. It is found in the stereocilium. Actin-binding protein involved in motile and morphological processes. Inhibits actin polymerization, likely by sequestering G-actin. By capping the barbed ends of filaments, it also regulates motility. Seems to play an important role in clathrin-mediated endocytosis and distribution of endocytic organelles. May play a role in regulating the mature length of the middle and short rows of stereocilia. The polypeptide is Twinfilin-2 (TWF2) (Pongo abelii (Sumatran orangutan)).